Consider the following 419-residue polypeptide: Inositol-tetrakisphosphate 1-kinase (419 aa).

Position 18 (lysine 18) interacts with 1D-myo-inositol 1,3,4-trisphosphate. ATP is bound by residues arginine 106 and lysine 157. Positions 117–325 (EAYMKDDRIC…IASVLQGQSS (209 aa)) constitute an ATP-grasp domain. 1D-myo-inositol 1,3,4-trisphosphate-binding residues include histidine 167 and lysine 199. ATP-binding positions include 188–199 (QNFINHNAVLYK), serine 214, serine 232, and serine 236. Residues aspartate 281, aspartate 295, and asparagine 297 each coordinate Mg(2+). Residue asparagine 297 participates in 1D-myo-inositol 1,3,4-trisphosphate binding. Residue lysine 388 is modified to N6-acetyllysine; by EP300 and CREBBP. The residue at position 401 (serine 401) is a Phosphoserine. Lysine 415 is subject to N6-acetyllysine; by EP300 and CREBBP.

The protein belongs to the ITPK1 family. As to quaternary structure, monomer. Interacts with GPS1/COPS1. Mg(2+) is required as a cofactor. Acetylation by EP300 and CREBBP destabilizes ITPK1, and down-regulates enzymatic activity. Deacetylated by SIRT1.

The enzyme catalyses 1D-myo-inositol 3,4,5,6-tetrakisphosphate + ATP = 1D-myo-inositol 1,3,4,5,6-pentakisphosphate + ADP + H(+). It carries out the reaction 1D-myo-inositol 1,3,4-trisphosphate + ATP = 1D-myo-inositol 1,3,4,5-tetrakisphosphate + ADP + H(+). The catalysed reaction is 1D-myo-inositol 1,3,4-trisphosphate + ATP = 1D-myo-inositol 1,3,4,6-tetrakisphosphate + ADP + H(+). It catalyses the reaction 1D-myo-inositol 3,4,6-trisphosphate + ATP = 1D-myo-inositol 1,3,4,6-tetrakisphosphate + ADP + H(+). The enzyme catalyses 1D-myo-inositol 1,3,4-trisphosphate + 1D-myo-inositol 1,3,4,5,6-pentakisphosphate = 1D-myo-inositol 3,4,5,6-tetrakisphosphate + 1D-myo-inositol 1,3,4,6-tetrakisphosphate. It carries out the reaction 1D-myo-inositol 1,3,4-trisphosphate + 1D-myo-inositol 1,3,4,5,6-pentakisphosphate = 1D-myo-inositol 3,4,5,6-tetrakisphosphate + 1D-myo-inositol 1,3,4,5-tetrakisphosphate. Functionally, kinase that can phosphorylate various inositol polyphosphate such as Ins(3,4,5,6)P4 or Ins(1,3,4)P3. Phosphorylates Ins(3,4,5,6)P4 at position 1 to form Ins(1,3,4,5,6)P5. This reaction is thought to have regulatory importance, since Ins(3,4,5,6)P4 is an inhibitor of plasma membrane Ca(2+)-activated Cl(-) channels, while Ins(1,3,4,5,6)P5 is not. Also phosphorylates Ins(1,3,4)P3 on O-5 and O-6 to form Ins(1,3,4,6)P4, an essential molecule in the hexakisphosphate (InsP6) pathway. Also acts as an inositol polyphosphate phosphatase that dephosphorylates Ins(1,3,4,5)P4 and Ins(1,3,4,6)P4 to Ins(1,3,4)P3, and Ins(1,3,4,5,6)P5 to Ins(3,4,5,6)P4. May also act as an isomerase that interconverts the inositol tetrakisphosphate isomers Ins(1,3,4,5)P4 and Ins(1,3,4,6)P4 in the presence of ADP and magnesium. Probably acts as the rate-limiting enzyme of the InsP6 pathway. Modifies TNF-alpha-induced apoptosis by interfering with the activation of TNFRSF1A-associated death domain. Plays an important role in MLKL-mediated necroptosis. Produces highly phosphorylated inositol phosphates such as inositolhexakisphosphate (InsP6) which bind to MLKL mediating the release of an N-terminal auto-inhibitory region leading to its activation. Essential for activated phospho-MLKL to oligomerize and localize to the cell membrane during necroptosis. The chain is Inositol-tetrakisphosphate 1-kinase (ITPK1) from Bos taurus (Bovine).